Here is a 177-residue protein sequence, read N- to C-terminus: Interleukin-1 receptor antagonist protein (177 aa).

A signal peptide spans Met1–Cys25. An intrachain disulfide couples Cys91 to Cys141. A glycan (N-linked (GlcNAc...) asparagine) is linked at Asn109.

This sequence belongs to the IL-1 family.

It localises to the secreted. Functionally, anti-inflammatory antagonist of interleukin-1 family of proinflammatory cytokines such as interleukin-1beta/IL1B and interleukin-1alpha/IL1A. Protects from immune dysregulation and uncontrolled systemic inflammation triggered by IL1 for a range of innate stimulatory agents such as pathogens. The polypeptide is Interleukin-1 receptor antagonist protein (IL1RN) (Oryctolagus cuniculus (Rabbit)).